The sequence spans 442 residues: Cytochrome c biogenesis protein CcsB (442 aa).

3 consecutive transmembrane segments (helical) span residues 17 to 37 (LRLA…GTVI), 76 to 96 (TPWY…CTLT), and 162 to 182 (LGPI…ILGA).

It belongs to the Ccs1/CcsB family. In terms of assembly, may interact with CcsA.

It is found in the cellular thylakoid membrane. Functionally, required during biogenesis of c-type cytochromes (cytochrome c6 and cytochrome f) at the step of heme attachment. The chain is Cytochrome c biogenesis protein CcsB from Thermosynechococcus vestitus (strain NIES-2133 / IAM M-273 / BP-1).